The following is a 436-amino-acid chain: [Pyruvate dehydrogenase (acetyl-transferring)] kinase isozyme 1, mitochondrial (436 aa).

Residues 1–28 (MRLARLLRGAALAGPGPGLRAAGFSRSF) constitute a mitochondrion transit peptide. Phosphotyrosine; by FGFR1 is present on tyrosine 136. Positions 163 to 393 (YKESFGVDPV…DAVIYIKALS (231 aa)) constitute a Histidine kinase domain. The residue at position 243 (tyrosine 243) is a Phosphotyrosine; by FGFR1, ABL1, FLT3 and JAK2. Residue tyrosine 244 is modified to Phosphotyrosine; by FGFR1. Residues 279 to 286 (ELFKNAMR), aspartate 318, 337 to 338 (ST), and 354 to 359 (GFGYGL) each bind ATP. Threonine 338 is modified (phosphothreonine). Lysine 405 is modified (N6-succinyllysine).

The protein belongs to the PDK/BCKDK protein kinase family. As to quaternary structure, homodimer, and heterodimer with PDK2. Interacts with the pyruvate dehydrogenase complex subunit DLAT, and is part of the multimeric pyruvate dehydrogenase complex that contains multiple copies of pyruvate dehydrogenase (E1), dihydrolipoamide acetyltransferase (DLAT, E2) and lipoamide dehydrogenase (DLD, E3). Interacts with phosphoglycerate kinase PGK1; the interaction is direct, occurs under hypoxic conditions and leads to PDK1-mediated inhibition of pyruvate dehydrogenase complex activity. In terms of processing, phosphorylated by constitutively activated ABL1, FGFR1, FLT3 and JAK2 (in vitro), and this may also occur in cancer cells that express constitutively activated ABL1, FGFR1, FLT3 and JAK2. Phosphorylation at Tyr-243 and Tyr-244 strongly increases kinase activity, while phosphorylation at Tyr-136 has a lesser effect. Phosphorylated under hypoxic conditions at Thr-338 by phosphoglycerate kinase PGK1 which has an activating effect. As to expression, expressed predominantly in the heart. Detected at lower levels in liver, skeletal muscle and pancreas.

It localises to the mitochondrion matrix. It catalyses the reaction L-seryl-[pyruvate dehydrogenase E1 alpha subunit] + ATP = O-phospho-L-seryl-[pyruvate dehydrogenase E1 alpha subunit] + ADP + H(+). Activity is enhanced by binding to the pyruvate dehydrogenase subunit DLAT. Inhibited by AZD7545; this compound interferes with DLAT binding and thereby inhibits kinase activity. Inhibited by dichloroacetate and radicicol. Activated under hypoxic conditions by phosphoglycerate kinase PGK1-mediated phosphorylation at Thr-338. Functionally, kinase that plays a key role in regulation of glucose and fatty acid metabolism and homeostasis via phosphorylation of the pyruvate dehydrogenase subunits PDHA1 and PDHA2. This inhibits pyruvate dehydrogenase activity, and thereby regulates metabolite flux through the tricarboxylic acid cycle, down-regulates aerobic respiration and inhibits the formation of acetyl-coenzyme A from pyruvate. Plays an important role in cellular responses to hypoxia and is important for cell proliferation under hypoxia. The polypeptide is [Pyruvate dehydrogenase (acetyl-transferring)] kinase isozyme 1, mitochondrial (PDK1) (Homo sapiens (Human)).